A 146-amino-acid chain; its full sequence is Large ribosomal subunit protein mL41 (146 aa).

Residues 1 to 16 (MKGSPISQFSKTSINA) constitute a mitochondrion transit peptide.

It belongs to the mitochondrion-specific ribosomal protein mL41 family. In terms of assembly, component of the mitochondrial large ribosomal subunit (mt-LSU). Mature yeast 74S mitochondrial ribosomes consist of a small (37S) and a large (54S) subunit. The 37S small subunit contains a 15S ribosomal RNA (15S mt-rRNA) and 34 different proteins. The 54S large subunit contains a 21S rRNA (21S mt-rRNA) and 46 different proteins.

It localises to the mitochondrion. In terms of biological role, component of the mitochondrial ribosome (mitoribosome), a dedicated translation machinery responsible for the synthesis of mitochondrial genome-encoded proteins, including at least some of the essential transmembrane subunits of the mitochondrial respiratory chain. The mitoribosomes are attached to the mitochondrial inner membrane and translation products are cotranslationally integrated into the membrane. This chain is Large ribosomal subunit protein mL41 (MRPL27), found in Saccharomyces cerevisiae (strain ATCC 204508 / S288c) (Baker's yeast).